The chain runs to 1070 residues: DNA-directed RNA polymerase subunit beta (1070 aa).

Belongs to the RNA polymerase beta chain family. In terms of assembly, in plastids the minimal PEP RNA polymerase catalytic core is composed of four subunits: alpha, beta, beta', and beta''. When a (nuclear-encoded) sigma factor is associated with the core the holoenzyme is formed, which can initiate transcription.

It localises to the plastid. It is found in the chloroplast. The enzyme catalyses RNA(n) + a ribonucleoside 5'-triphosphate = RNA(n+1) + diphosphate. Its function is as follows. DNA-dependent RNA polymerase catalyzes the transcription of DNA into RNA using the four ribonucleoside triphosphates as substrates. The sequence is that of DNA-directed RNA polymerase subunit beta from Nicotiana tomentosiformis (Tobacco).